The sequence spans 467 residues: MAWNTNLRWRLPLLCLVLEVAMVVLFGLFVRYSPDADSSWSNEKRKGNITSDLENEFYYRYPSFQDVHVMVFLGFGFLMTFLQRYGYCALGFNFLLAALGVQWALLMQGWFQYTKDRLILLGIKNLIDADSCVASVCVAFGAVLGKVSPVQMLLMTFFQVALFSANEFLLLHVLEVKDAGGSITIHIFGAYFGLTVTWILYRHNLDHSRERQSSVYHSNLFAMIGTLFLWIYWPSFNSAMSNYGDAQHRAAINTYCSLAASVLTSVAMSSVLHKKGKLDMVHIQNATLAGGVGVGTAAEMMLMPYGALIVGFICGAVSTLGFVYLTPFLESRLRIQDTCGIHNLHGIPGLIGAIVGAVTAAYASPDGDRGFVYPFGFHNEKDEKVQGRFQAFGLLLTLAIAMVGGTIMGLILKLPFWGQAMDEDCFDDSIYWEMHEEKSSSPEDHTHKPSVPTEPVEQPTSSATLAP.

Over 1–9 (MAWNTNLRW) the chain is Cytoplasmic. A helical membrane pass occupies residues 10–30 (RLPLLCLVLEVAMVVLFGLFV). Residues 31-61 (RYSPDADSSWSNEKRKGNITSDLENEFYYRY) are Extracellular-facing. N-linked (GlcNAc...) asparagine glycosylation is present at Asn48. Residues 62 to 82 (PSFQDVHVMVFLGFGFLMTFL) form a helical membrane-spanning segment. Residues 83–86 (QRYG) are Cytoplasmic-facing. The helical transmembrane segment at 87–107 (YCALGFNFLLAALGVQWALLM) threads the bilayer. The Extracellular portion of the chain corresponds to 108-131 (QGWFQYTKDRLILLGIKNLIDADS). 2 helical membrane-spanning segments follow: residues 132–152 (CVAS…PVQM) and 153–173 (LLMT…LLHV). Over 174–179 (LEVKDA) the chain is Extracellular. The chain crosses the membrane as a helical span at residues 180–200 (GGSITIHIFGAYFGLTVTWIL). At 201 to 219 (YRHNLDHSRERQSSVYHSN) the chain is on the cytoplasmic side. Residues 220 to 240 (LFAMIGTLFLWIYWPSFNSAM) traverse the membrane as a helical segment. Residues 241-251 (SNYGDAQHRAA) are Extracellular-facing. Residues 252-272 (INTYCSLAASVLTSVAMSSVL) traverse the membrane as a helical segment. Topologically, residues 273 to 282 (HKKGKLDMVH) are cytoplasmic. A helical membrane pass occupies residues 283–303 (IQNATLAGGVGVGTAAEMMLM). Residue Pro304 is a topological domain, extracellular. The helical transmembrane segment at 305-325 (YGALIVGFICGAVSTLGFVYL) threads the bilayer. Residues 326–343 (TPFLESRLRIQDTCGIHN) are Cytoplasmic-facing. The chain crosses the membrane as a helical span at residues 344-364 (LHGIPGLIGAIVGAVTAAYAS). The Extracellular portion of the chain corresponds to 365 to 391 (PDGDRGFVYPFGFHNEKDEKVQGRFQA). Residues 392–412 (FGLLLTLAIAMVGGTIMGLIL) form a helical membrane-spanning segment. Residues 413–467 (KLPFWGQAMDEDCFDDSIYWEMHEEKSSSPEDHTHKPSVPTEPVEQPTSSATLAP) lie on the Cytoplasmic side of the membrane. Residues 436 to 447 (EEKSSSPEDHTH) show a composition bias toward basic and acidic residues. The disordered stretch occupies residues 436–467 (EEKSSSPEDHTHKPSVPTEPVEQPTSSATLAP). The span at 458–467 (QPTSSATLAP) shows a compositional bias: polar residues.

This sequence belongs to the ammonium transporter (TC 2.A.49) family. Rh subfamily. Homotrimer. In terms of processing, N-glycosylated.

It localises to the cell membrane. It is found in the apical cell membrane. The catalysed reaction is NH4(+)(in) = NH4(+)(out). The enzyme catalyses methylamine(out) = methylamine(in). It carries out the reaction CO2(out) = CO2(in). Ammonium transporter involved in the maintenance of acid-base homeostasis. Transports ammonium and its related derivative methylammonium across the plasma membrane of epithelial cells likely contributing to renal transepithelial ammonia transport and ammonia metabolism. Postulated to primarily mediate an electroneutral bidirectional transport of NH3 ammonia species according to a mechanism that implies interaction of an NH4(+) ion with acidic residues of the pore entry followed by dissociation of NH4(+) into NH3 and H(+). As a result NH3 transits through the central pore and is protonated on the extracellular side reforming NH4(+). May act as a CO2 channel providing for renal acid secretion. This Oryctolagus cuniculus (Rabbit) protein is Ammonium transporter Rh type C (RHCG).